The following is a 101-amino-acid chain: Large ribosomal subunit protein bL21 (101 aa).

This sequence belongs to the bacterial ribosomal protein bL21 family. Part of the 50S ribosomal subunit. Contacts protein L20.

Its function is as follows. This protein binds to 23S rRNA in the presence of protein L20. The polypeptide is Large ribosomal subunit protein bL21 (Magnetococcus marinus (strain ATCC BAA-1437 / JCM 17883 / MC-1)).